The following is a 131-amino-acid chain: Protein Turandot M (131 aa).

Positions 1–23 are cleaved as a signal peptide; that stretch reads MNPAIYLSCLVVFSLLLLGKVNA.

Belongs to the Turandot family.

The protein localises to the secreted. In terms of biological role, a humoral factor that may play a role in stress tolerance. Requires Mekk1 expression in the fat body to regulate response to septic injury and consequent immune response. In Drosophila erecta (Fruit fly), this protein is Protein Turandot M.